We begin with the raw amino-acid sequence, 355 residues long: Homeotic protein knotted-1 (355 aa).

The tract at residues K205–E233 is disordered. The ELK domain occupies E236–L256. Positions S257 to S320 form a DNA-binding region, homeobox; TALE-type.

This sequence belongs to the TALE/KNOX homeobox family. In terms of tissue distribution, expressed in the apical meristems, in the newly emerged lateral primordia in the floral bud, in their vascular bundles and in the cortex parenchyma of the floral pedicle. Also present in the lateral tips of leaf primordia.

Its subcellular location is the nucleus. Appears to be involved in meristem formation and in the regulation of leaf morphology. Misexpression makes the leaf more compound which is always associated with growth retardation and loss of apical dominance, resulting in dwarfed, bushy plants. Probably binds to the DNA sequence 5'-TGAC-3'. In Solanum lycopersicum (Tomato), this protein is Homeotic protein knotted-1 (KN1).